Consider the following 107-residue polypeptide: Putative ankyrin repeat protein L14 (107 aa).

3 ANK repeats span residues 19–48 (DNNY…NIRA), 49–78 (DNDC…NIRA), and 80–107 (NDCA…AVLS).

The chain is Putative ankyrin repeat protein L14 from Acanthamoeba polyphaga (Amoeba).